Consider the following 1628-residue polypeptide: THO complex subunit 2 (1628 aa).

Basic and acidic residues-rich tracts occupy residues Met1–Gln10 and Thr1360–Arg1399. 2 disordered regions span residues Met1 to Lys21 and Val1337 to Gln1628. Residues Thr1406 and Thr1408 each carry the phosphothreonine modification. Basic and acidic residues predominate over residues Asp1411–Pro1429. The segment covering Gln1430–Ser1444 has biased composition (polar residues). The segment covering Ala1461–Arg1474 has biased composition (basic and acidic residues). A compositionally biased stretch (low complexity) spans Asn1476–Val1493. Positions Ser1494 to Ile1526 are enriched in basic and acidic residues. The segment covering Ser1527–Gly1550 has biased composition (polar residues). Basic and acidic residues predominate over residues Asn1551 to Arg1560. A Phosphoserine modification is found at Ser1577. Residues Leu1581 to Gln1628 show a composition bias toward basic and acidic residues.

This sequence belongs to the THOC2 family. In terms of assembly, component of the THO complex. THO associates with DNA and RNA in vitro.

The protein resides in the nucleus. Its function is as follows. Component the THO subcomplex of the TREX complex, which operates in coupling transcription elongation to mRNA export. The THO complex is recruited to transcribed genes and moves along the gene with the elongating polymerase during transcription. THO is important for stabilizing nascent RNA in the RNA polymerase II elongation complex by preventing formation of DNA:RNA hybrids behind the elongating polymerase. This is THO complex subunit 2 (tho2) from Schizosaccharomyces pombe (strain 972 / ATCC 24843) (Fission yeast).